Consider the following 221-residue polypeptide: Cytidylate kinase (221 aa).

An ATP-binding site is contributed by 7–15; the sequence is GPSASGKSS.

It belongs to the cytidylate kinase family. Type 1 subfamily.

The protein localises to the cytoplasm. It catalyses the reaction CMP + ATP = CDP + ADP. It carries out the reaction dCMP + ATP = dCDP + ADP. The polypeptide is Cytidylate kinase (Borreliella burgdorferi (strain ZS7) (Borrelia burgdorferi)).